The sequence spans 355 residues: Phosphate acyltransferase (355 aa).

The protein belongs to the PlsX family. As to quaternary structure, homodimer. Probably interacts with PlsY.

The protein localises to the cytoplasm. The enzyme catalyses a fatty acyl-[ACP] + phosphate = an acyl phosphate + holo-[ACP]. It functions in the pathway lipid metabolism; phospholipid metabolism. In terms of biological role, catalyzes the reversible formation of acyl-phosphate (acyl-PO(4)) from acyl-[acyl-carrier-protein] (acyl-ACP). This enzyme utilizes acyl-ACP as fatty acyl donor, but not acyl-CoA. The sequence is that of Phosphate acyltransferase from Erythrobacter litoralis (strain HTCC2594).